Consider the following 544-residue polypeptide: Chaperonin GroEL (544 aa).

Residues Thr-30 to Pro-33, Lys-51, Asp-87 to Thr-91, Gly-415, Asp-481 to Leu-483, and Asp-497 each bind ATP.

It belongs to the chaperonin (HSP60) family. Forms a cylinder of 14 subunits composed of two heptameric rings stacked back-to-back. Interacts with the co-chaperonin GroES.

It localises to the cytoplasm. The catalysed reaction is ATP + H2O + a folded polypeptide = ADP + phosphate + an unfolded polypeptide.. Together with its co-chaperonin GroES, plays an essential role in assisting protein folding. The GroEL-GroES system forms a nano-cage that allows encapsulation of the non-native substrate proteins and provides a physical environment optimized to promote and accelerate protein folding. This Chlamydia trachomatis serovar L2 (strain ATCC VR-902B / DSM 19102 / 434/Bu) protein is Chaperonin GroEL.